The sequence spans 384 residues: 1-deoxy-D-xylulose 5-phosphate reductoisomerase (384 aa).

8 residues coordinate NADPH: Thr-10, Gly-11, Ser-12, Ile-13, Gly-36, Lys-37, Asn-38, and Asn-121. Lys-122 serves as a coordination point for 1-deoxy-D-xylulose 5-phosphate. NADPH is bound at residue Glu-123. Residue Asp-147 coordinates Mn(2+). Residues Ser-148, Glu-149, Ser-173, and His-196 each coordinate 1-deoxy-D-xylulose 5-phosphate. Position 149 (Glu-149) interacts with Mn(2+). An NADPH-binding site is contributed by Gly-202. 1-deoxy-D-xylulose 5-phosphate-binding residues include Ser-209, Asn-214, Lys-215, and Glu-218. Glu-218 is a Mn(2+) binding site.

This sequence belongs to the DXR family. Mg(2+) is required as a cofactor. Requires Mn(2+) as cofactor.

The enzyme catalyses 2-C-methyl-D-erythritol 4-phosphate + NADP(+) = 1-deoxy-D-xylulose 5-phosphate + NADPH + H(+). It functions in the pathway isoprenoid biosynthesis; isopentenyl diphosphate biosynthesis via DXP pathway; isopentenyl diphosphate from 1-deoxy-D-xylulose 5-phosphate: step 1/6. Functionally, catalyzes the NADPH-dependent rearrangement and reduction of 1-deoxy-D-xylulose-5-phosphate (DXP) to 2-C-methyl-D-erythritol 4-phosphate (MEP). This is 1-deoxy-D-xylulose 5-phosphate reductoisomerase from Exiguobacterium sibiricum (strain DSM 17290 / CCUG 55495 / CIP 109462 / JCM 13490 / 255-15).